A 960-amino-acid chain; its full sequence is Putative helicase L207/L206 (960 aa).

The interval 1-32 (MTSKTENKKSVSSKTGRTTNNSTNKKTTEKSV) is disordered. Over residues 12-25 (SSKTGRTTNNSTNK) the composition is skewed to low complexity. In terms of domain architecture, SF3 helicase spans 646-807 (SMREYILTLL…FIKHSEATKK (162 aa)).

This chain is Putative helicase L207/L206, found in Acanthamoeba polyphaga mimivirus (APMV).